The primary structure comprises 352 residues: Protein RecA (352 aa).

64 to 71 (GPESSGKT) serves as a coordination point for ATP. The segment at 328 to 352 (NPSSVPEAEAEHDPEQDEEPTFDLE) is disordered. Over residues 335-352 (AEAEHDPEQDEEPTFDLE) the composition is skewed to acidic residues.

It belongs to the RecA family.

It localises to the cytoplasm. In terms of biological role, can catalyze the hydrolysis of ATP in the presence of single-stranded DNA, the ATP-dependent uptake of single-stranded DNA by duplex DNA, and the ATP-dependent hybridization of homologous single-stranded DNAs. It interacts with LexA causing its activation and leading to its autocatalytic cleavage. This chain is Protein RecA, found in Brevibacillus brevis (strain 47 / JCM 6285 / NBRC 100599).